The sequence spans 64 residues: MYVCLCNGISDKKIRQAVRQFSPHSFQQLKKFIPVGNQCGKCVRAAREVMEDELMQLPEFKESA.

Positions 4, 6, 39, and 42 each coordinate [2Fe-2S] cluster.

The protein belongs to the Bfd family. Monomer. Interacts with bacterioferritin (BFR); up to 12 Bfd proteins can bind to the BFR. Requires [2Fe-2S] cluster as cofactor.

Its function is as follows. Required for mobilization of iron from the bacterioferritin (BFR) complex. This is Bacterioferritin-associated ferredoxin (bfd) from Escherichia coli O6:H1 (strain CFT073 / ATCC 700928 / UPEC).